Reading from the N-terminus, the 930-residue chain is Protein translocase subunit SecA (930 aa).

Residues Q87, 105 to 109 (GEGKT), and D515 contribute to the ATP site. Positions 914, 916, 925, and 926 each coordinate Zn(2+).

Belongs to the SecA family. In terms of assembly, monomer and homodimer. Part of the essential Sec protein translocation apparatus which comprises SecA, SecYEG and auxiliary proteins SecDF-YajC and YidC. The cofactor is Zn(2+).

Its subcellular location is the cell inner membrane. It is found in the cytoplasm. It carries out the reaction ATP + H2O + cellular proteinSide 1 = ADP + phosphate + cellular proteinSide 2.. Its function is as follows. Part of the Sec protein translocase complex. Interacts with the SecYEG preprotein conducting channel. Has a central role in coupling the hydrolysis of ATP to the transfer of proteins into and across the cell membrane, serving both as a receptor for the preprotein-SecB complex and as an ATP-driven molecular motor driving the stepwise translocation of polypeptide chains across the membrane. The protein is Protein translocase subunit SecA of Cupriavidus metallidurans (strain ATCC 43123 / DSM 2839 / NBRC 102507 / CH34) (Ralstonia metallidurans).